We begin with the raw amino-acid sequence, 136 residues long: Ribonuclease P protein component (136 aa).

This sequence belongs to the RnpA family. Consists of a catalytic RNA component (M1 or rnpB) and a protein subunit.

The enzyme catalyses Endonucleolytic cleavage of RNA, removing 5'-extranucleotides from tRNA precursor.. Functionally, RNaseP catalyzes the removal of the 5'-leader sequence from pre-tRNA to produce the mature 5'-terminus. It can also cleave other RNA substrates such as 4.5S RNA. The protein component plays an auxiliary but essential role in vivo by binding to the 5'-leader sequence and broadening the substrate specificity of the ribozyme. This Burkholderia mallei (strain NCTC 10247) protein is Ribonuclease P protein component.